Consider the following 852-residue polypeptide: Polyphosphate kinase (852 aa).

2 disordered regions span residues 1 to 36 (MATG…DRPI) and 58 to 82 (SHDP…SRRK). A compositionally biased stretch (basic and acidic residues) spans 20 to 36 (VARDHPGCGPHRLDRPI). Residues 58–67 (SHDPAPSQSV) are compositionally biased toward polar residues. ATP is bound at residue N131. The segment at 251-303 (GDEIGPQRTPPPSDSLDNRVPSNLKRNSDTANQQPTPAENISAPEDGAEQTEP) is disordered. Residues 258–303 (RTPPPSDSLDNRVPSNLKRNSDTANQQPTPAENISAPEDGAEQTEP) are insert. Positions 270 to 289 (VPSNLKRNSDTANQQPTPAE) are enriched in polar residues. Mg(2+)-binding residues include R524 and R554. H584 (phosphohistidine intermediate) is an active-site residue. Positions 617, 713, and 741 each coordinate ATP.

This sequence belongs to the polyphosphate kinase 1 (PPK1) family. Mg(2+) is required as a cofactor. An intermediate of this reaction is the autophosphorylated ppk in which a phosphate is covalently linked to a histidine residue through a N-P bond.

It carries out the reaction [phosphate](n) + ATP = [phosphate](n+1) + ADP. Its function is as follows. Catalyzes the reversible transfer of the terminal phosphate of ATP to form a long-chain polyphosphate (polyP). In Rhodopirellula baltica (strain DSM 10527 / NCIMB 13988 / SH1), this protein is Polyphosphate kinase.